Consider the following 469-residue polypeptide: MDKKMKRTRIADALHGGLVGQEINIKGWVRTKRGNKAVNFIALNDGSTIHNMQIVADLASFDAAQMSQITTGACIGVIGTLVESQGAGQSVEVQASAIEIYGTADPATYPLQKKGHTLEFLREIAHLRPRTNTFGVIYRIRHHMAIAIHTFFHNKGYYYFHAPLITASDCEGAGQMFQVTTLNPDSLPRTEEGQVDYRKDFFGRHTSLTVSGQLEGEMAAMALGGIYTFGPTFRAENSNTPRHLAEFWMIEPEVAFLEIEDNMDLAEEFIKYCVQWALDNCMDDISFLSEHFDKELIDRLKFVLEKPFVRLAYTEGIRILEEAVKNGVKFEFPIYWGADLASEHERYLVEVHFKTPVIMTDYPKEIKSFYMKLNDDGKTVRGMDVLFPKIGEIIGGSEREADYDKLVARANEMGVPEKDIWWYLDSRRYGTAPHSGFGLGFERLLLFVTGMSNIRDVIPFPRTPNNAEF.

The protein belongs to the class-II aminoacyl-tRNA synthetase family. As to quaternary structure, homodimer.

The protein localises to the cytoplasm. It carries out the reaction tRNA(Asn) + L-asparagine + ATP = L-asparaginyl-tRNA(Asn) + AMP + diphosphate + H(+). This is Asparagine--tRNA ligase from Porphyromonas gingivalis (strain ATCC 33277 / DSM 20709 / CIP 103683 / JCM 12257 / NCTC 11834 / 2561).